A 73-amino-acid chain; its full sequence is UPF0235 protein LBL_1291 (73 aa).

This sequence belongs to the UPF0235 family.

The chain is UPF0235 protein LBL_1291 from Leptospira borgpetersenii serovar Hardjo-bovis (strain L550).